The following is a 378-amino-acid chain: Flagellin E (378 aa).

2 coiled-coil regions span residues 98-139 (QSAN…KLLN) and 311-339 (MQNRFQHAISNLDNVHENLAASNSRIKDA).

The protein belongs to the bacterial flagellin family. In terms of assembly, heteromer of multiple flagellin subunits including FlaA, FlaB, FlaC, FlaD and FlaE.

The protein resides in the secreted. The protein localises to the bacterial flagellum. Flagellin is the subunit protein which polymerizes to form the filaments of bacterial flagella. FlaE is not essential for flagellar synthesis and motility. The sequence is that of Flagellin E (flaE) from Vibrio cholerae serotype O1 (strain ATCC 39541 / Classical Ogawa 395 / O395).